Consider the following 206-residue polypeptide: Large ribosomal subunit protein uL13w (206 aa).

The protein belongs to the universal ribosomal protein uL13 family.

In Arabidopsis thaliana (Mouse-ear cress), this protein is Large ribosomal subunit protein uL13w (RPL13AD).